The chain runs to 232 residues: dTTP/UTP pyrophosphatase (232 aa).

Residue Asp103 is the Proton acceptor of the active site.

Belongs to the Maf family. YhdE subfamily. A divalent metal cation is required as a cofactor.

The protein localises to the cytoplasm. The enzyme catalyses dTTP + H2O = dTMP + diphosphate + H(+). It catalyses the reaction UTP + H2O = UMP + diphosphate + H(+). The catalysed reaction is 5-methyl-UTP + H2O = 5-methyl-UMP + diphosphate + H(+). It carries out the reaction psi-UTP + H2O = psi-UMP + diphosphate + H(+). Its function is as follows. Nucleoside triphosphate pyrophosphatase that hydrolyzes dTTP and UTP. Can also hydrolyze the modified nucleotides 5-methyl-UTP (m(5)UTP) and pseudo-UTP. Has weak activity with CTP. May have a dual role in cell division arrest and in preventing the incorporation of modified nucleotides into cellular nucleic acids. The sequence is that of dTTP/UTP pyrophosphatase from Saccharomyces cerevisiae (strain ATCC 204508 / S288c) (Baker's yeast).